The sequence spans 678 residues: Glycine--tRNA ligase beta subunit (678 aa).

The protein belongs to the class-II aminoacyl-tRNA synthetase family. As to quaternary structure, tetramer of two alpha and two beta subunits.

It is found in the cytoplasm. It catalyses the reaction tRNA(Gly) + glycine + ATP = glycyl-tRNA(Gly) + AMP + diphosphate. The polypeptide is Glycine--tRNA ligase beta subunit (Streptococcus pneumoniae (strain 70585)).